Consider the following 469-residue polypeptide: 3-isopropylmalate dehydratase large subunit (469 aa).

Residues cysteine 347, cysteine 407, and cysteine 410 each coordinate [4Fe-4S] cluster.

It belongs to the aconitase/IPM isomerase family. LeuC type 1 subfamily. As to quaternary structure, heterodimer of LeuC and LeuD. It depends on [4Fe-4S] cluster as a cofactor.

The catalysed reaction is (2R,3S)-3-isopropylmalate = (2S)-2-isopropylmalate. The protein operates within amino-acid biosynthesis; L-leucine biosynthesis; L-leucine from 3-methyl-2-oxobutanoate: step 2/4. Catalyzes the isomerization between 2-isopropylmalate and 3-isopropylmalate, via the formation of 2-isopropylmaleate. The protein is 3-isopropylmalate dehydratase large subunit of Photorhabdus laumondii subsp. laumondii (strain DSM 15139 / CIP 105565 / TT01) (Photorhabdus luminescens subsp. laumondii).